We begin with the raw amino-acid sequence, 306 residues long: Acetyl-coenzyme A carboxylase carboxyl transferase subunit beta (306 aa).

A CoA carboxyltransferase N-terminal domain is found at 25–294 (VWTKCDSCGQ…PSPDAPREAV (270 aa)). Zn(2+) is bound by residues Cys-29, Cys-32, Cys-48, and Cys-51. The segment at 29–51 (CDSCGQVLYRAELERNLEVCPKC) adopts a C4-type zinc-finger fold. The interval 286–306 (SPDAPREAVVVPPVPDQDHEA) is disordered.

It belongs to the AccD/PCCB family. As to quaternary structure, acetyl-CoA carboxylase is a heterohexamer composed of biotin carboxyl carrier protein (AccB), biotin carboxylase (AccC) and two subunits each of ACCase subunit alpha (AccA) and ACCase subunit beta (AccD). Zn(2+) serves as cofactor.

The protein resides in the cytoplasm. The enzyme catalyses N(6)-carboxybiotinyl-L-lysyl-[protein] + acetyl-CoA = N(6)-biotinyl-L-lysyl-[protein] + malonyl-CoA. It participates in lipid metabolism; malonyl-CoA biosynthesis; malonyl-CoA from acetyl-CoA: step 1/1. Functionally, component of the acetyl coenzyme A carboxylase (ACC) complex. Biotin carboxylase (BC) catalyzes the carboxylation of biotin on its carrier protein (BCCP) and then the CO(2) group is transferred by the transcarboxylase to acetyl-CoA to form malonyl-CoA. The chain is Acetyl-coenzyme A carboxylase carboxyl transferase subunit beta from Cronobacter sakazakii (strain ATCC BAA-894) (Enterobacter sakazakii).